The chain runs to 222 residues: 2-amino-5-formylamino-6-ribosylaminopyrimidin-4(3H)-one 5'-monophosphate deformylase (222 aa).

Residues Glu29, His31, Asp40, and His108 each coordinate Fe cation.

The protein belongs to the creatininase superfamily. FAPy deformylase family. In terms of assembly, homodimer. It depends on Fe(2+) as a cofactor. Zn(2+) is required as a cofactor.

The enzyme catalyses 2-amino-5-formylamino-6-(5-phospho-D-ribosylamino)pyrimidin-4(3H)-one + H2O = 2,5-diamino-6-(1-D-ribosylamino)pyrimidin-4(3H)-one 5'-phosphate + formate + H(+). Its pathway is cofactor biosynthesis; coenzyme F420 biosynthesis. The protein operates within cofactor biosynthesis; riboflavin biosynthesis. Its function is as follows. Catalyzes the hydrolysis of the formamide of 2-amino-5-formylamino-6-ribosylamino-4(3H)-pyrimidinone 5'-monophosphate (FAPy) to form 2,5-diamino-6-ribosylamino-4(3H)-pyrimidinone 5'-phosphate (APy). The sequence is that of 2-amino-5-formylamino-6-ribosylaminopyrimidin-4(3H)-one 5'-monophosphate deformylase from Methanocaldococcus infernus (strain DSM 11812 / JCM 15783 / ME).